The chain runs to 2346 residues: Nucleoprotein TPR (2346 aa).

Coiled-coil stretches lie at residues 38-190 (DEYC…HKEI), 217-366 (QLQS…NLES), 395-493 (YAKS…SRQV), and 565-596 (KMLL…NNTV). The segment at 622-649 (VDLDDSNLEPNDSALDTSEQPAANFEES) is disordered. Polar residues predominate over residues 629–642 (LEPNDSALDTSEQP). Coiled-coil stretches lie at residues 643 to 1158 (AANF…IEAL) and 1196 to 1247 (EEGR…DELN). Positions 1187 to 1655 (LNASGLTAAE…SPRTANVKPM (469 aa)) are interacts with Mad1. A phosphothreonine mark is found at Thr-1259, Thr-1302, Thr-1338, and Thr-1390. Coiled-coil stretches lie at residues 1281–1536 (TDSN…KRTE) and 1579–1627 (SYDE…GSQQ). Composition is skewed to polar residues over residues 1621 to 1649 (RQLG…SPRT) and 1657 to 1667 (GSATVQQSATV). 3 disordered regions span residues 1621–1677 (RQLG…ETPL), 1695–1768 (PTSQ…YMPS), and 1821–2346 (SPRV…GRFP). Over residues 1702–1722 (AGSSTSTSSSSSSSSTSTTSA) the composition is skewed to low complexity. The segment covering 1738–1747 (PQQQVHTTGS) has biased composition (polar residues). 2 stretches are compositionally biased toward low complexity: residues 1752–1761 (SMASSSPTSS) and 1827–1878 (SSSS…PSSS). A compositionally biased stretch (polar residues) spans 1879–1891 (NVTTTQAGCSSQG). Residues 1953-2023 (QEDDIQVVDS…QDNNEVDIEV (71 aa)) show a composition bias toward acidic residues. Residues 2028–2080 (MQAQEESQSLDNQAIATASASTQENNQSQAITSGSGESSNPVTLPQAEASNWK) show a composition bias toward polar residues. The segment covering 2082-2091 (AAASTSTAAA) has biased composition (low complexity). 2 stretches are compositionally biased toward polar residues: residues 2097 to 2110 (SVEI…SNFC) and 2142 to 2159 (GAAS…GESS). Basic and acidic residues predominate over residues 2165–2184 (KAADDGGDHADGTDNAREAD). 2 stretches are compositionally biased toward polar residues: residues 2193 to 2223 (ATGQ…NQAN) and 2302 to 2322 (RDTS…NRFA). The span at 2323-2332 (QRTRNRRPIR) shows a compositional bias: basic residues.

Belongs to the TPR family. Part of the nuclear pore complex (NPC). Associates with male-specific lethal (MSL) histone acetyltransferase complex. Interacts with Mad2; the interaction is required for efficient recruitment of Mad2 to unattached kinetochore and occurs in a microtubule-independent manner. Interacts with Mad1 (N-terminus). Interacts with Chro, east and Asator; the interaction is part of a macromolecular complex forming the spindle matrix during mitosis. Interacts with Nup98. In males, interacts with histone acetyltransferase mof. In terms of processing, mps1-mediated phosphorylation disrupts interaction with Mad1 during mitosis. In terms of tissue distribution, expressed in salivary glands, fat body, tracheal tube, esophageal tube and anterior ejaculatory duct (at protein level).

The protein localises to the nucleus. Its subcellular location is the nucleus matrix. It is found in the nucleus lamina. It localises to the nucleus envelope. The protein resides in the nucleus membrane. The protein localises to the nuclear pore complex. Its subcellular location is the cytoplasm. It is found in the cytoskeleton. It localises to the spindle. The protein resides in the chromosome. The protein localises to the centromere. Its subcellular location is the kinetochore. It is found in the midbody. Component of the nuclear pore complex (NPC), a complex required for the trafficking across the nuclear envelope. Functions as a scaffolding element in the nuclear phase of the NPC. Plays a role in chromosomal organization and gene expression regulation; stimulates transcription by promoting the formation of an open chromatin environment. Binds chromatin to nucleoporin-associated regions (NARs) that define transcriptionally active regions of the genome. Associates with extended chromosomal regions that alternate between domains of high density binding with those of low occupancy. Preferentially binds to NARs of the male X chromosome. In males, together with Nup153, required for the localization of the male-specific lethal (MSL) histone acetyltransferase complex to the X chromosome and therefore for the transcription of dosage compensation genes. In males, restrains dosage-compensated expression at the level of nascent transcription probably by interacting with the MSL complex and by modulating RNA Polymerase II phosphorylation status and activity. During mitosis forms a gel-like spindle matrix complex together with Skeletor (Skel), Chro, east, and Asator embedding the microtubule spindle apparatus. During interphase localizes Mad1 to the nuclear pore complex and thereby might act as a scaffold to assemble the Mad1-C-Mad2 complex, a heterotetramer that catalyzes the structural conversion of open-Mad2 (O-Mad2) into closed-Mad2 (C-Mad2) which is essential for spindle-assembly checkpoint (SAC). During the metaphase-anaphase transition and before chromosome congression, is phosphorylated by Msp-1; this modification releases Mad1 from the nuclear pore complex and thereby promotes assembly of SAC ensuring a timely and effective recruitment of spindle checkpoint proteins like Mad1, Mad2 and Mps1 to unattached kinetochores (KT). In testes, has a role in stem cell asymmetric division and maintenance via regulation of mitotic spindle assembly checkpoint (SAC) complex. This is Nucleoprotein TPR from Drosophila melanogaster (Fruit fly).